The sequence spans 124 residues: Glutaredoxin-2 (124 aa).

Cysteine 13 and cysteine 16 form a disulfide bridge.

It belongs to the glutaredoxin family. As to quaternary structure, homodimer.

Its subcellular location is the host cytoplasm. Glutaredoxin necessary for virion morphogenesis and virus replication. Functions as a thiol-disulfide transfer protein between membrane-associated OPG128 and substrates OPG095 or OPG053. The complete pathway for formation of disulfide bonds in intracellular virion membrane proteins sequentially involves oxidation of OPG072, OPG128 and OPG088. Exhibit thioltransferase and dehydroascorbate reductase activities in vitro. The chain is Glutaredoxin-2 (OPG088) from Oryctolagus cuniculus (Rabbit).